Here is a 190-residue protein sequence, read N- to C-terminus: Glutathione peroxidase 2 (190 aa).

Residue Sec-40 is part of the active site. A non-standard amino acid (selenocysteine) is located at residue Sec-40.

Belongs to the glutathione peroxidase family. Homotetramer.

It localises to the cytoplasm. The protein resides in the cytosol. It carries out the reaction 2 glutathione + H2O2 = glutathione disulfide + 2 H2O. The catalysed reaction is a hydroperoxy polyunsaturated fatty acid + 2 glutathione = a hydroxy polyunsaturated fatty acid + glutathione disulfide + H2O. The enzyme catalyses tert-butyl hydroperoxide + 2 glutathione = tert-butanol + glutathione disulfide + H2O. It catalyses the reaction cumene hydroperoxide + 2 glutathione = 2-phenylpropan-2-ol + glutathione disulfide + H2O. It carries out the reaction (13S)-hydroperoxy-(9Z,11E)-octadecadienoate + 2 glutathione = (13S)-hydroxy-(9Z,11E)-octadecadienoate + glutathione disulfide + H2O. The catalysed reaction is (5S)-hydroperoxy-(6E,8Z,11Z,14Z)-eicosatetraenoate + 2 glutathione = (5S)-hydroxy-(6E,8Z,11Z,14Z)-eicosatetraenoate + glutathione disulfide + H2O. The enzyme catalyses (12R)-hydroperoxy-(5Z,8Z,10E,14Z)-eicosatetraenoate + 2 glutathione = (12R)-hydroxy-(5Z,8Z,10E,14Z)-eicosatetraenoate + glutathione disulfide + H2O. It catalyses the reaction (15S)-hydroperoxy-(5Z,8Z,11Z,13E)-eicosatetraenoate + 2 glutathione = (15S)-hydroxy-(5Z,8Z,11Z,13E)-eicosatetraenoate + glutathione disulfide + H2O. Its function is as follows. Catalyzes the reduction of hydroperoxides in a glutathione-dependent manner thus regulating cellular redox homeostasis. Can reduce small soluble hydroperoxides such as H2O2, cumene hydroperoxide and tert-butyl hydroperoxide, as well as several fatty acid-derived hydroperoxides. Cannot reduce phosphatidycholine hydroperoxide. This is Glutathione peroxidase 2 (Gpx2) from Mus musculus (Mouse).